The chain runs to 516 residues: Maturase K (516 aa).

It belongs to the intron maturase 2 family. MatK subfamily.

The protein localises to the plastid. It is found in the chloroplast. Usually encoded in the trnK tRNA gene intron. Probably assists in splicing its own and other chloroplast group II introns. In Chara connivens (Convergent stonewort), this protein is Maturase K.